A 65-amino-acid chain; its full sequence is uncharacterized protein (65 aa).

The next 2 membrane-spanning stretches (helical) occupy residues 4–24 and 39–59; these read AWLF…DKVL and LPIP…FIVF.

The protein localises to the membrane. This is an uncharacterized protein from Streptococcus pneumoniae serotype 2 (strain D39 / NCTC 7466).